The chain runs to 286 residues: Ribosomal RNA small subunit methyltransferase A (286 aa).

S-adenosyl-L-methionine contacts are provided by Asn-28, Leu-30, Gly-55, Glu-77, Asp-103, and Asn-123.

It belongs to the class I-like SAM-binding methyltransferase superfamily. rRNA adenine N(6)-methyltransferase family. RsmA subfamily.

It localises to the cytoplasm. It catalyses the reaction adenosine(1518)/adenosine(1519) in 16S rRNA + 4 S-adenosyl-L-methionine = N(6)-dimethyladenosine(1518)/N(6)-dimethyladenosine(1519) in 16S rRNA + 4 S-adenosyl-L-homocysteine + 4 H(+). Its function is as follows. Specifically dimethylates two adjacent adenosines (A1518 and A1519) in the loop of a conserved hairpin near the 3'-end of 16S rRNA in the 30S particle. May play a critical role in biogenesis of 30S subunits. The sequence is that of Ribosomal RNA small subunit methyltransferase A from Bradyrhizobium sp. (strain BTAi1 / ATCC BAA-1182).